Here is a 31-residue protein sequence, read N- to C-terminus: Cytochrome b6-f complex subunit 6 (31 aa).

Residues 3 to 23 (ILISYFCFLLVFFLFTLILFI) form a helical membrane-spanning segment.

It belongs to the PetL family. As to quaternary structure, the 4 large subunits of the cytochrome b6-f complex are cytochrome b6, subunit IV (17 kDa polypeptide, PetD), cytochrome f and the Rieske protein, while the 4 small subunits are PetG, PetL, PetM and PetN. The complex functions as a dimer.

Its subcellular location is the plastid. It localises to the chloroplast thylakoid membrane. Functionally, component of the cytochrome b6-f complex, which mediates electron transfer between photosystem II (PSII) and photosystem I (PSI), cyclic electron flow around PSI, and state transitions. PetL is important for photoautotrophic growth as well as for electron transfer efficiency and stability of the cytochrome b6-f complex. This Welwitschia mirabilis (Tree tumbo) protein is Cytochrome b6-f complex subunit 6.